The following is a 1135-amino-acid chain: APC membrane recruitment protein 1 (1135 aa).

Position 1 is an N-acetylmethionine (methionine 1). 7 disordered regions span residues 1 to 115 (METQ…EGTG), 156 to 308 (AEKF…VGDP), 339 to 405 (SMTD…EDDD), 447 to 484 (GLAP…DDSG), 736 to 764 (NFGG…KEGN), 921 to 948 (LQAQ…PLSL), and 1007 to 1135 (VPES…NLAK). The span at 10-19 (QAKGAAASGS) shows a compositional bias: low complexity. The segment covering 23–35 (QTAEKGAKNKAAE) has biased composition (basic and acidic residues). Residues 36–50 (ATEGPTSEPSSSGPG) show a composition bias toward low complexity. The segment covering 73-83 (FGGGRSKGSGK) has biased composition (gly residues). 2 stretches are compositionally biased toward basic and acidic residues: residues 94-107 (KTHD…HGPE) and 196-208 (GPER…HEHV). Over residues 238–248 (KVSPTPEPSPP) the composition is skewed to pro residues. A Phosphoserine modification is found at serine 246. Composition is skewed to basic and acidic residues over residues 253 to 262 (MACKDPEKPM) and 282 to 291 (EEPHSPETGE). Acidic residues predominate over residues 373 to 405 (ALPDDDDEEEEEEEEVELEEEEEEVKEEEEDDD). Positions 455-466 (TPQSDQQESAPN) are enriched in polar residues. Positions 926–938 (EDSDEEDEEEEEG) are enriched in acidic residues. Residues 1058–1069 (PSCSSSSGGFSP) show a composition bias toward low complexity. A compositionally biased stretch (polar residues) spans 1119–1135 (SLATSYSSTAMNGNLAK).

This sequence belongs to the Amer family. In terms of assembly, interacts with CTNNB1, AXIN1, LRP6, KEAP1, APC and BTRC. Interacts with SCF (SKP1-CUL1-F-box protein) E3 ubiquitin-protein ligase complexes containing BTRC and/or FBXW11. Identified in the beta-catenin destruction complex containing CTNNB1, APC, AXIN1 and AXIN2. Interacts with WT1. In terms of tissue distribution, detected in fetal and adult kidney, brain and spleen.

Its subcellular location is the cytoplasm. It is found in the cell membrane. The protein resides in the nucleus. Functionally, regulator of the canonical Wnt signaling pathway. Acts by specifically binding phosphatidylinositol 4,5-bisphosphate (PtdIns(4,5)P2), translocating to the cell membrane and interacting with key regulators of the canonical Wnt signaling pathway, such as components of the beta-catenin destruction complex. Acts both as a positive and negative regulator of the Wnt signaling pathway, depending on the context: acts as a positive regulator by promoting LRP6 phosphorylation. Also acts as a negative regulator by acting as a scaffold protein for the beta-catenin destruction complex and promoting stabilization of Axin at the cell membrane. Promotes CTNNB1 ubiquitination and degradation. Involved in kidney development. The chain is APC membrane recruitment protein 1 (AMER1) from Homo sapiens (Human).